The chain runs to 653 residues: Epithelial sodium channel subunit gamma (653 aa).

Residues 1 to 55 (MAPGEKIKAKIKKNLPVKGPQAPTIKELMRWYCLNTNTHGCRRIVVSPGRLRRLL) are Cytoplasmic-facing. A helical membrane pass occupies residues 56–76 (WIAFTLTAVGLIFWQCALLVF). At 77–538 (SFYTVSVSIK…EMLLSNFGGQ (462 aa)) the chain is on the extracellular side. 8 disulfides stabilise this stretch: Cys-100–Cys-287, Cys-211–Cys-218, Cys-264–Cys-271, Cys-376–Cys-461, Cys-398–Cys-457, Cys-402–Cys-453, Cys-411–Cys-438, and Cys-413–Cys-427. A gating release of inhibition by proteolysis (GRIP); protease-sensitive region that is responsible for the proteolytic activation of the channel region spans residues 137 to 225 (RKQRDTESWS…SDCATYTFSS (89 aa)). A glycan (N-linked (GlcNAc...) asparagine) is linked at Asn-213. Asn-275 carries an N-linked (GlcNAc...) asparagine glycan. An N-linked (GlcNAc...) asparagine glycan is attached at Asn-501. Residues 539-559 (LGLWMSCSVVCVIEIIEVFFI) traverse the membrane as a helical segment. Over 560–653 (DSLSIVTRRQ…LADTRLPDEP (94 aa)) the chain is Cytoplasmic. The interval 582–632 (AAPSAEAPSGAQGQENPALEIDDDLPTFTSALSLPPAPGAQVPGTPPPRYN) is disordered. The PY motif; recruits WW domain-containing proteins and is thereby required for ubiquitination and inhibition of the channel by NEDD4 and NEDD4L motif lies at 627–631 (PPPRY).

This sequence belongs to the amiloride-sensitive sodium channel (TC 1.A.6) family. SCNN1G subfamily. Component of the heterotrimeric epithelial sodium channel (ENaC) composed of an alpha/SCNN1A, a beta/SCNN1B and a gamma/SCNN1G subunit. Interacts with WWP1 (via WW domains). Interacts with WWP2 (via WW domains); inhibits the channel. Interacts with the full-length immature form of PCSK9 (pro-PCSK9); inhibits ENaC by promoting its proteasomal degradation. Interacts with BPIFA1; the interaction is indirect via SCNN1B and inhibits the proteolytic maturation of SCNN1A and SCNN1G and the activation of ENaC. In terms of processing, phosphorylated on serine and threonine residues. Aldosterone and insulin increase the basal level of phosphorylation. Ubiquitinated. Can be ubiquitinated at multiple sites and undergo monoubiquitination and polyubiquitination. Ubiquitination by NEDD4 or NEDD4L inhibits the ENaC channel through endocytosis, intracellular retention and degradation of its individual subunits. Post-translationally, ENaC is activated through the proteolytic maturation of its subunits. Furin cleaves the SCNN1G subunit first, followed by cleavage by prostasin (PRSS8), which results in a stepwise increase in the open probability of the channel due to the release of an inhibitory tract. BPIFA1, which is recruited by the SCNN1B subunit, prevents the proteolytic activation of ENaC. In terms of processing, N-glycosylated. N-linked glycans are processed to complex type during ENaC complex assembly and transport to the plasma membrane.

It is found in the apical cell membrane. The enzyme catalyses Na(+)(in) = Na(+)(out). Originally identified and characterized by its inhibition by the diuretic drug amiloride. In terms of biological role, this is one of the three pore-forming subunits of the heterotrimeric epithelial sodium channel (ENaC), a critical regulator of sodium balance and fluid homeostasis. ENaC operates in epithelial tissues, where it mediates the electrodiffusion of sodium ions from extracellular fluid through the apical membrane of cells, with water following osmotically. It plays a key role in maintaining sodium homeostasis through electrogenic sodium reabsorption in the kidneys. Additionally, ENaC is essential for airway surface liquid homeostasis, which is crucial for proper mucus clearance. This chain is Epithelial sodium channel subunit gamma, found in Oryctolagus cuniculus (Rabbit).